Reading from the N-terminus, the 299-residue chain is Acarbose 7(IV)-phosphotransferase (299 aa).

The protein belongs to the carbohydrate kinase PfkB family.

The catalysed reaction is acarbose + ATP = acarbose 7(IV)-phosphate + ADP + H(+). Its function is as follows. Catalyzes the phosphorylation of the alpha-glucosidase inhibitor acarbose. Phosphorylation of acarbose could be a resistance-like self-protection mechanism. In Actinoplanes sp. (strain ATCC 31044 / CBS 674.73 / SE50/110), this protein is Acarbose 7(IV)-phosphotransferase.